A 1657-amino-acid chain; its full sequence is Ras GTPase-activating-like protein IQGAP1 (1657 aa).

At Ser2 the chain carries N-acetylserine. Ser2 carries the phosphoserine modification. One can recognise a Calponin-homology (CH) domain in the interval 44–159; the sequence is LCHLEEAKRW…YCIHALSLYL (116 aa). A Phosphotyrosine modification is found at Tyr172. Ser330 carries the post-translational modification Phosphoserine. Positions 679 to 712 constitute a WW domain; sequence GDNNSKWVKHWVKGGYYYYHNLETQEGGWDEPPN. 4 IQ domains span residues 745–774, 775–804, 805–834, and 835–864; these read NEGL…FLKK, QIPA…YLRS, HKDE…YFRD, and HIND…AEDP. Residues 956 to 1274 form a C1 region; that stretch reads GGLKALSKEK…FFQTACDVPE (319 aa). The Ras-GAP domain occupies 1020–1269; sequence YLLLRLFKTA…QKFRRFFQTA (250 aa). A C2 region spans residues 1276–1657; that stretch reads QDKFNVDEYS…FLLNKKFYGK (382 aa). Positions 1410 to 1448 are disordered; sequence TPATSEQEAEHQRAMQRRAIRDAKTPDKMKKSKSVKEDS. The span at 1417-1448 shows a compositional bias: basic and acidic residues; it reads EAEHQRAMQRRAIRDAKTPDKMKKSKSVKEDS. Phosphoserine; by PKC is present on Ser1441. Ser1443 bears the Phosphoserine; by PKC/PRKCE mark.

In terms of assembly, interacts with CDC42; the interaction is demonstrated with IQGAP1 in GTP-bound and in nucleotide-free state. Interacts with RAC1. Does not interact with RHOA. Interacts with TSG101. Interacts with PAK6. Interacts with TMEM14B; this interaction increases IQGAP1 phosphorylation and induces its nuclear translocation. Interacts with SASH1. Interacts with PJVK. Interacts with SLC26A4; this interaction enhances the chloride-bicarbonate exchange activity of SLC26A4. Interacts with SVEP1. Interacts with ILK; the interaction is required for localization of IQGAP to the cell cortex. As to quaternary structure, (Microbial infection) Interacts with ebolavirus vp40. (Microbial infection) Interacts with human cytomegalovirus protein UL5. In terms of assembly, (Microbial infection) Interacts with C.jejuni invasion antigen D (CiaD). Phosphorylation of Ser-1443 by PKC/PRKCE prevents interaction between C1 and C2, allowing binding of nucleotide-free CDC42. Ser-1443 phosphorylation enhances the ability to promote neurite outgrowth. As to expression, expressed in the placenta, lung, and kidney. A lower level expression is seen in the heart, liver, skeletal muscle and pancreas.

It is found in the cell membrane. It localises to the nucleus. The protein localises to the cytoplasm. Its subcellular location is the cell cortex. The protein resides in the apical cell membrane. It is found in the basolateral cell membrane. In terms of biological role, plays a crucial role in regulating the dynamics and assembly of the actin cytoskeleton. Recruited to the cell cortex by interaction with ILK which allows it to cooperate with its effector DIAPH1 to locally stabilize microtubules and allow stable insertion of caveolae into the plasma membrane. Binds to activated CDC42 but does not stimulate its GTPase activity. Associates with calmodulin. May promote neurite outgrowth. May play a possible role in cell cycle regulation by contributing to cell cycle progression after DNA replication arrest. The protein is Ras GTPase-activating-like protein IQGAP1 (IQGAP1) of Homo sapiens (Human).